We begin with the raw amino-acid sequence, 842 residues long: Protein P (842 aa).

The segment at 1-177 is terminal protein domain (TP); it reads MPLSYQHFRR…FCGSPYSWEQ (177 aa). Positions 178 to 345 are spacer; sequence ELHHGAFLDG…YCLTHLVNLL (168 aa). The interval 186 to 273 is disordered; that stretch reads DGPSRMGEES…AKNIASRSAS (88 aa). The segment covering 223 to 239 has biased composition (polar residues); the sequence is GPQSQQRPLDGSQQGRS. The tract at residues 346–689 is polymerase/reverse transcriptase domain (RT); it reads EDWGPCTEHG…YLNLYPVARQ (344 aa). In terms of domain architecture, Reverse transcriptase spans 356 to 599; that stretch reads KHHIRIPRTP…YSLNFMGYVI (244 aa). Residues Asp-428, Asp-550, and Asp-551 each contribute to the Mg(2+) site.

This sequence belongs to the hepadnaviridae P protein family.

It catalyses the reaction DNA(n) + a 2'-deoxyribonucleoside 5'-triphosphate = DNA(n+1) + diphosphate. It carries out the reaction Endonucleolytic cleavage to 5'-phosphomonoester.. Activated by host HSP70 and HSP40 in vitro to be able to bind the epsilon loop of the pgRNA. Because deletion of the RNase H region renders the protein partly chaperone-independent, the chaperones may be needed indirectly to relieve occlusion of the RNA-binding site by this domain. Inhibited by several reverse-transcriptase inhibitors: Lamivudine, Adefovir and Entecavir. In terms of biological role, multifunctional enzyme that converts the viral RNA genome into dsDNA in viral cytoplasmic capsids. This enzyme displays a DNA polymerase activity that can copy either DNA or RNA templates, and a ribonuclease H (RNase H) activity that cleaves the RNA strand of RNA-DNA heteroduplexes in a partially processive 3'- to 5'-endonucleasic mode. Neo-synthesized pregenomic RNA (pgRNA) are encapsidated together with the P protein, and reverse-transcribed inside the nucleocapsid. Initiation of reverse-transcription occurs first by binding the epsilon loop on the pgRNA genome, and is initiated by protein priming, thereby the 5'-end of (-)DNA is covalently linked to P protein. Partial (+)DNA is synthesized from the (-)DNA template and generates the relaxed circular DNA (RC-DNA) genome. After budding and infection, the RC-DNA migrates in the nucleus, and is converted into a plasmid-like covalently closed circular DNA (cccDNA). The activity of P protein does not seem to be necessary for cccDNA generation, and is presumably released from (+)DNA by host nuclear DNA repair machinery. This is Protein P from Homo sapiens (Human).